We begin with the raw amino-acid sequence, 461 residues long: Porin AaxA (461 aa).

Positions 1–22 (MSFRSVLLTALLSLSFTTTMQA) are cleaved as a signal peptide.

The protein belongs to the OprB family.

Its subcellular location is the cell outer membrane. Its function is as follows. Facilitates L-arginine uptake, as part of the AaxABC system. The arginine uptake by the bacterium in the macrophage may be a virulence factor against the host innate immune response. The sequence is that of Porin AaxA (aaxA) from Chlamydia trachomatis serovar D (strain ATCC VR-885 / DSM 19411 / UW-3/Cx).